Here is a 530-residue protein sequence, read N- to C-terminus: Cytochrome P450 2U1 (530 aa).

Helical transmembrane passes span 21-41 (VRATGGALLLCLLAVLLGWVW), 99-119 (VYGNIFSFFIGHRLVVVLSDF), 247-267 (ICLHSQLFLINICPWFYYLPF), and 328-348 (LFYIIGDLFIAGTDTTTNSLL). Position 476 (Cys476) interacts with heme. A helical transmembrane segment spans residues 481-501 (LAKMELFLMFVSLMQTFTFAL).

The protein belongs to the cytochrome P450 family. Heme serves as cofactor. As to expression, widely expressed. Expressed in heart, brain and liver.

It localises to the endoplasmic reticulum membrane. The protein resides in the microsome membrane. The protein localises to the mitochondrion inner membrane. The enzyme catalyses an omega-methyl-long-chain fatty acid + reduced [NADPH--hemoprotein reductase] + O2 = an omega-hydroxy-long-chain fatty acid + oxidized [NADPH--hemoprotein reductase] + H2O + H(+). It catalyses the reaction (5Z,8Z,11Z,14Z)-eicosatetraenoate + reduced [NADPH--hemoprotein reductase] + O2 = 19-hydroxy-(5Z,8Z,11Z,14Z)-eicosatetraenoate + oxidized [NADPH--hemoprotein reductase] + H2O + H(+). It carries out the reaction (5Z,8Z,11Z,14Z)-eicosatetraenoate + reduced [NADPH--hemoprotein reductase] + O2 = 20-hydroxy-(5Z,8Z,11Z,14Z)-eicosatetraenoate + oxidized [NADPH--hemoprotein reductase] + H2O + H(+). The catalysed reaction is N-[(5Z,8Z,11Z,14Z)-eicosatetraenoyl]-serotonin + reduced [NADPH--hemoprotein reductase] + O2 = 2-oxo-N-[(5Z,8Z,11Z,14Z)-eicosatetraenoyl]-serotonin + oxidized [NADPH--hemoprotein reductase] + H2O + H(+). Its function is as follows. A cytochrome P450 monooxygenase involved in the metabolism of arachidonic acid and its conjugates. Mechanistically, uses molecular oxygen inserting one oxygen atom into a substrate, and reducing the second into a water molecule, with two electrons provided by NADPH via cytochrome P450 reductase (CPR; NADPH-ferrihemoprotein reductase). Acts as an omega and omega-1 hydroxylase for arachidonic acid and possibly for other long chain fatty acids. May modulate the arachidonic acid signaling pathway and play a role in other fatty acid signaling processes. May down-regulate the biological activities of N-arachidonoyl-serotonin, an endocannabinoid that has anti-nociceptive effects through inhibition of fatty acid amide hydrolase FAAH, TRPV1 receptor and T-type calcium channels. Catalyzes C-2 oxidation of the indole ring of N-arachidonoyl-serotonin forming a less active product 2-oxo-N-arachidonoyl-serotonin. The chain is Cytochrome P450 2U1 from Mus musculus (Mouse).